The chain runs to 1407 residues: JmjC domain-containing histone demethylation protein 1 (1407 aa).

Disordered stretches follow at residues 1–86 and 98–151; these read MISA…SSTI and PTFT…NAFS. Basic and acidic residues-rich tracts occupy residues 55–67 and 125–140; these read DHVRSTPTDKRPS and PVERPAKRPRSERDES. The span at 141–150 shows a compositional bias: polar residues; it reads SYTQHRSNAF. The PHD-type zinc finger occupies 323 to 382; that stretch reads QASCATCNLVRIPVDNEDQDVTWISCDGCKRWFHIVCAGFKNDRETRTVDKFICKTCRPI. The JmjC domain occupies 577 to 735; that stretch reads VSQSKLGRLI…MQIKIAKIEK (159 aa). T628 contributes to the substrate binding site. Positions 631 and 633 each coordinate Fe cation. A substrate-binding site is contributed by K648. Position 703 (H703) interacts with Fe cation. 4 disordered regions span residues 893 to 987, 1004 to 1027, 1122 to 1183, and 1252 to 1389; these read KLSL…LGPK, KEENNGASGSQMTVSTSSLGHHTP, IKAQ…QDSV, and DEMD…SLRL. Composition is skewed to basic and acidic residues over residues 896–914 and 928–938; these read LAEKRPAGRPSRRSERNAD and LSERPAVDIQK. A compositionally biased stretch (polar residues) spans 1008–1027; it reads NGASGSQMTVSTSSLGHHTP. A compositionally biased stretch (basic and acidic residues) spans 1254 to 1264; that stretch reads MDIHDQVDAGG. Residues 1273-1284 show a composition bias toward low complexity; sequence PSSGSRQSSRQP. Over residues 1285–1296 the composition is skewed to basic and acidic residues; the sequence is RQVERYMPEVHF. Over residues 1297-1349 the composition is skewed to low complexity; the sequence is AKTAKSTTTTPQTTRRSSFGSSGRKTTPGLSSGSKKSGSRPSSSHGKKSLSPS.

It belongs to the JHDM1 histone demethylase family. Requires Fe(2+) as cofactor.

The protein resides in the nucleus. It carries out the reaction N(6),N(6)-dimethyl-L-lysyl(36)-[histone H3] + 2 2-oxoglutarate + 2 O2 = L-lysyl(36)-[histone H3] + 2 formaldehyde + 2 succinate + 2 CO2. In terms of biological role, histone demethylase that specifically demethylates 'Lys-36' of histone H3, thereby playing a central role in histone code. The protein is JmjC domain-containing histone demethylation protein 1 (jhd1) of Emericella nidulans (strain FGSC A4 / ATCC 38163 / CBS 112.46 / NRRL 194 / M139) (Aspergillus nidulans).